A 261-amino-acid polypeptide reads, in one-letter code: MEKRIELERRARKVNQITELNLDNCRSTSIVGLTDEYTALESLSLINVGLTTLKGFPKLPNLKKLELSDNRISSGLNYLTTSPKLQYLNLSGNKIKDLETLKPLEEFKNLVVLDLFNNDATQVDNYREKIFKMLPSLNFLDGFDCNDEEVQSDGDDDDEVNGNDSDEVGVSDEDDDSDDSDEEANGEVSLSEVYNDDLEEDNSDWEGEDEAGEEDEEEDSDIDDADGDANESAASVNAKDKDGEKEADESQVRGKKRKHDG.

LRR repeat units lie at residues 16–37 (QITE…TDEY), 39–60 (ALES…PKLP), 61–83 (NLKK…TTSP), and 84–105 (KLQY…KPLE). The 39-residue stretch at 118-156 (NDATQVDNYREKIFKMLPSLNFLDGFDCNDEEVQSDGDD) folds into the LRRCT domain. 2 stretches are compositionally biased toward acidic residues: residues 145–185 (CNDE…EEAN) and 194–229 (YNDD…DGDA). A disordered region spans residues 145 to 261 (CNDEEVQSDG…VRGKKRKHDG (117 aa)). A compositionally biased stretch (basic and acidic residues) spans 238 to 252 (AKDKDGEKEADESQV).

Belongs to the ANP32 family. Phosphorylated on serine residues.

The protein resides in the nucleus. It localises to the cytoplasm. Its function is as follows. Implicated in a number of cellular processes, including proliferation, differentiation, caspase-dependent and caspase-independent apoptosis, suppression of transformation (tumor suppressor), inhibition of protein phosphatase 2A, regulation of mRNA trafficking and stability, and inhibition of acetyltransferases as part of the INHAT (inhibitor of histone acetyltransferases) complex. The sequence is that of Acidic leucine-rich nuclear phosphoprotein 32 family member A (Anp32a) from Drosophila melanogaster (Fruit fly).